A 121-amino-acid polypeptide reads, in one-letter code: Neuromedin-B (121 aa).

A signal peptide spans 1 to 24 (MTLRAVGVRLLGGLLLFALLAAGA). Met56 carries the post-translational modification Methionine amide. The propeptide occupies 60–121 (SLEPPSPSLL…RRLLVQTLQK (62 aa)). The interval 61-80 (LEPPSPSLLGTAPHTSLRDQ) is disordered.

It belongs to the bombesin/neuromedin-B/ranatensin family.

It is found in the secreted. The protein localises to the cell projection. The protein resides in the neuron projection. Its function is as follows. Stimulates smooth muscle contraction. Induces sighing by acting directly on the pre-Botzinger complex, a cluster of several thousand neurons in the ventrolateral medulla responsible for inspiration during respiratory activity. Contributes to the induction of sneezing following exposure to chemical irritants or allergens which causes release of NMB by nasal sensory neurons and activation of NMBR-expressing neurons in the sneeze-evoking region of the brainstem. These in turn activate neurons of the caudal ventral respiratory group, giving rise to the sneezing response. Contributes to induction of acute itch, possibly through activation of the NMBR receptor on dorsal root ganglion neurons. Increases expression of NMBR and steroidogenic mediators STAR, CYP11A1 and HSD3B1 in Leydig cells, induces secretion of testosterone by Leydig cells and also promotes Leydig cell proliferation. Plays a role in the innate immune response to influenza A virus infection by enhancing interferon alpha expression and reducing expression of IL6. Plays a role in CSF1-induced proliferation of osteoclast precursors by contributing to the positive regulation of the expression of the CSF1 receptor CSF1R. This is Neuromedin-B (NMB) from Bos taurus (Bovine).